We begin with the raw amino-acid sequence, 215 residues long: Ion-translocating oxidoreductase complex subunit G (215 aa).

Residues G9–G29 form a helical membrane-spanning segment. T176 carries the post-translational modification FMN phosphoryl threonine.

This sequence belongs to the RnfG family. As to quaternary structure, the complex is composed of six subunits: RnfA, RnfB, RnfC, RnfD, RnfE and RnfG. FMN is required as a cofactor.

The protein resides in the cell inner membrane. Part of a membrane-bound complex that couples electron transfer with translocation of ions across the membrane. The protein is Ion-translocating oxidoreductase complex subunit G of Pseudoalteromonas atlantica (strain T6c / ATCC BAA-1087).